Reading from the N-terminus, the 213-residue chain is CASP-like protein UU2 (213 aa).

The interval 1–26 (MEDPKGAWQSDVFDNGRDFKPHDKAP) is disordered. At 1-53 (MEDPKGAWQSDVFDNGRDFKPHDKAPANVTAGTTPPMYNVGAGGSEGNSKALS) the chain is on the cytoplasmic side. A compositionally biased stretch (basic and acidic residues) spans 14–25 (DNGRDFKPHDKA). The chain crosses the membrane as a helical span at residues 54–74 (IISIVLRCLSIMFNVVSLGVI). Over 75–96 (ASNQGKSYFVVWRTLNSSNMQY) the chain is Extracellular. Residue Asn90 is glycosylated (N-linked (GlcNAc...) asparagine). The helical transmembrane segment at 97-117 (LFAINVIVLVYCVVQLILSII) threads the bilayer. Residues 118–137 (NLVQGKMVLSGPTQPASTIT) lie on the Cytoplasmic side of the membrane. A helical membrane pass occupies residues 138 to 158 (YICDQGLTYMLMAGFGAGVAL). At 159–184 (QASVDKGESGMLDCSGANEFCGKNKA) the chain is on the extracellular side. Residues 185–205 (SAALSFLGFVCIALSANLNYL) traverse the membrane as a helical segment. The Cytoplasmic portion of the chain corresponds to 206-213 (RLYFMAAK).

Belongs to the Casparian strip membrane proteins (CASP) family. As to quaternary structure, homodimer and heterodimers.

The protein resides in the cell membrane. This chain is CASP-like protein UU2, found in Physcomitrium patens (Spreading-leaved earth moss).